The chain runs to 359 residues: Cyclic AMP response element-binding protein B (359 aa).

Disordered stretches follow at residues 1–73 (MDNS…AQGG) and 185–238 (VRNK…FTEI). The span at 9–32 (NGNSSAASGSNDVVDVVAQQAAAA) shows a compositional bias: low complexity. A compositionally biased stretch (gly residues) spans 33 to 47 (VGGGGGGGGGGGGGN). A compositionally biased stretch (low complexity) spans 48-70 (PQQQQQNPQSTTAGGPTGATNNA). Residues 198–257 (KPEPNTQHPEDSDESLSDDDSQHHRSELTRRPSYNKIFTEISGPDMSGASLPMSDGVLNS) enclose the KID domain. Phosphoserine occurs at positions 209, 212, and 214. The segment covering 217–227 (DSQHHRSELTR) has biased composition (basic and acidic residues). The 60-residue stretch at 300 to 359 (TRKREIRLQKNREAARECRRKKKEYIKCLENRVAVLENQNKALIEELKSLKELYCQTKND) folds into the bZIP domain. The segment at 301-326 (RKREIRLQKNREAARECRRKKKEYIK) is basic motif. Residues 328 to 349 (LENRVAVLENQNKALIEELKSL) are leucine-zipper.

The protein belongs to the bZIP family. ATF subfamily. As to quaternary structure, homodimer. Most cells of the adult brain; cell bodies, but not neuropil.

The protein localises to the nucleus. Its function is as follows. Isoform E is a PKA-dependent transcriptional activator. Isoform J is a direct antagonist of activation by isoform E in cell culture. Binds the cAMP response element (CRE) (consensus: 5'-GTGACGT[AC][AG]-3'), a sequence present in many viral and cellular promoters. Has a role in long-term memory. This is Cyclic AMP response element-binding protein B from Drosophila melanogaster (Fruit fly).